Reading from the N-terminus, the 247-residue chain is Cytochrome c oxidase subunit 2 (247 aa).

Over 12–38 (DVPTPWGLYFQDSSTPNQEGIIELHDN) the chain is Mitochondrial intermembrane. A helical transmembrane segment spans residues 39–59 (IMFYLVLILCTVSWLLFSIVK). The Mitochondrial matrix portion of the chain corresponds to 60–78 (DSSKNPLPHKYLVHGQTIE). Residues 79–101 (IIWTILPAVVLLIIAFPSFILLY) form a helical membrane-spanning segment. The Mitochondrial intermembrane segment spans residues 102 to 247 (LCDEVISPAM…KEFLTWLNEQ (146 aa)). H182, C217, E219, C221, H225, and M228 together coordinate Cu cation. E219 contacts Mg(2+).

This sequence belongs to the cytochrome c oxidase subunit 2 family. Component of the cytochrome c oxidase (complex IV, CIV), a multisubunit enzyme composed of a catalytic core of 3 subunits and several supernumerary subunits. The complex exists as a monomer or a dimer and forms supercomplexes (SCs) in the inner mitochondrial membrane with ubiquinol-cytochrome c oxidoreductase (cytochrome b-c1 complex, complex III, CIII). Cu cation serves as cofactor. The signal sequence of COX2 is processed by IMP1.

The protein resides in the mitochondrion inner membrane. The catalysed reaction is 4 Fe(II)-[cytochrome c] + O2 + 8 H(+)(in) = 4 Fe(III)-[cytochrome c] + 2 H2O + 4 H(+)(out). Component of the cytochrome c oxidase, the last enzyme in the mitochondrial electron transport chain which drives oxidative phosphorylation. The respiratory chain contains 3 multisubunit complexes succinate dehydrogenase (complex II, CII), ubiquinol-cytochrome c oxidoreductase (cytochrome b-c1 complex, complex III, CIII) and cytochrome c oxidase (complex IV, CIV), that cooperate to transfer electrons derived from NADH and succinate to molecular oxygen, creating an electrochemical gradient over the inner membrane that drives transmembrane transport and the ATP synthase. Cytochrome c oxidase is the component of the respiratory chain that catalyzes the reduction of oxygen to water. Electrons originating from reduced cytochrome c in the intermembrane space (IMS) are transferred via the dinuclear copper A center (CU(A)) of subunit 2 and heme A of subunit 1 to the active site in subunit 1, a binuclear center (BNC) formed by heme A3 and copper B (CU(B)). The BNC reduces molecular oxygen to 2 water molecules using 4 electrons from cytochrome c in the IMS and 4 protons from the mitochondrial matrix. This chain is Cytochrome c oxidase subunit 2 (COX2), found in Cyberlindnera mrakii (Yeast).